A 159-amino-acid chain; its full sequence is 17.7 kDa class I heat shock protein (159 aa).

Residues 45–159 (DAAAFAGARI…PDVKSIQISG (115 aa)) form the sHSP domain.

This sequence belongs to the small heat shock protein (HSP20) family. May form oligomeric structures.

The protein resides in the cytoplasm. The protein is 17.7 kDa class I heat shock protein (HSP17.7) of Oryza sativa subsp. japonica (Rice).